Consider the following 514-residue polypeptide: 2,3-bisphosphoglycerate-independent phosphoglycerate mutase (514 aa).

The Mn(2+) site is built by aspartate 13 and serine 63. Serine 63 (phosphoserine intermediate) is an active-site residue. Residues histidine 124, 154–155 (RD), arginine 186, arginine 192, 258–261 (RADR), and lysine 332 each bind substrate. The Mn(2+) site is built by aspartate 399, histidine 403, aspartate 440, histidine 441, and histidine 459.

Belongs to the BPG-independent phosphoglycerate mutase family. In terms of assembly, monomer. The cofactor is Mn(2+).

It catalyses the reaction (2R)-2-phosphoglycerate = (2R)-3-phosphoglycerate. It participates in carbohydrate degradation; glycolysis; pyruvate from D-glyceraldehyde 3-phosphate: step 3/5. In terms of biological role, catalyzes the interconversion of 2-phosphoglycerate and 3-phosphoglycerate. The protein is 2,3-bisphosphoglycerate-independent phosphoglycerate mutase of Legionella pneumophila (strain Paris).